Reading from the N-terminus, the 241-residue chain is Small ribosomal subunit protein uS3 (241 aa).

The KH type-2 domain occupies 39–109; that stretch reads IRQHVEKNLS…QIRINVIEVS (71 aa). The disordered stretch occupies residues 215–241; that stretch reads EQAMAAPAPTPRKKRRPQQFEDRSNEE. Positions 232-241 are enriched in basic and acidic residues; sequence QQFEDRSNEE.

Belongs to the universal ribosomal protein uS3 family. In terms of assembly, part of the 30S ribosomal subunit. Forms a tight complex with proteins S10 and S14.

In terms of biological role, binds the lower part of the 30S subunit head. Binds mRNA in the 70S ribosome, positioning it for translation. The protein is Small ribosomal subunit protein uS3 of Crocosphaera subtropica (strain ATCC 51142 / BH68) (Cyanothece sp. (strain ATCC 51142)).